Reading from the N-terminus, the 544-residue chain is Chaperonin GroEL (544 aa).

Residues 30 to 33, Lys51, 87 to 91, Gly415, and Asp495 contribute to the ATP site; these read TLGP and DGTTT.

Belongs to the chaperonin (HSP60) family. As to quaternary structure, forms a cylinder of 14 subunits composed of two heptameric rings stacked back-to-back. Interacts with the co-chaperonin GroES.

The protein resides in the cytoplasm. The catalysed reaction is ATP + H2O + a folded polypeptide = ADP + phosphate + an unfolded polypeptide.. Functionally, together with its co-chaperonin GroES, plays an essential role in assisting protein folding. The GroEL-GroES system forms a nano-cage that allows encapsulation of the non-native substrate proteins and provides a physical environment optimized to promote and accelerate protein folding. This Methylobacillus flagellatus (strain ATCC 51484 / DSM 6875 / VKM B-1610 / KT) protein is Chaperonin GroEL.